The chain runs to 188 residues: Putative pre-16S rRNA nuclease (188 aa).

A disordered region spans residues 144 to 188 (HAPGRVVAGPKGRRKARHRGQGGTGTEQQADAGGRARPHATEGKG). Residues 154–163 (KGRRKARHRG) are compositionally biased toward basic residues.

It belongs to the YqgF nuclease family.

It localises to the cytoplasm. In terms of biological role, could be a nuclease involved in processing of the 5'-end of pre-16S rRNA. The sequence is that of Putative pre-16S rRNA nuclease from Kineococcus radiotolerans (strain ATCC BAA-149 / DSM 14245 / SRS30216).